Consider the following 156-residue polypeptide: ATP synthase subunit b (156 aa).

Residues 11-31 form a helical membrane-spanning segment; the sequence is AIAFVLFVIFCMKYVWPPIMA.

It belongs to the ATPase B chain family. As to quaternary structure, F-type ATPases have 2 components, F(1) - the catalytic core - and F(0) - the membrane proton channel. F(1) has five subunits: alpha(3), beta(3), gamma(1), delta(1), epsilon(1). F(0) has three main subunits: a(1), b(2) and c(10-14). The alpha and beta chains form an alternating ring which encloses part of the gamma chain. F(1) is attached to F(0) by a central stalk formed by the gamma and epsilon chains, while a peripheral stalk is formed by the delta and b chains.

Its subcellular location is the cell inner membrane. F(1)F(0) ATP synthase produces ATP from ADP in the presence of a proton or sodium gradient. F-type ATPases consist of two structural domains, F(1) containing the extramembraneous catalytic core and F(0) containing the membrane proton channel, linked together by a central stalk and a peripheral stalk. During catalysis, ATP synthesis in the catalytic domain of F(1) is coupled via a rotary mechanism of the central stalk subunits to proton translocation. Its function is as follows. Component of the F(0) channel, it forms part of the peripheral stalk, linking F(1) to F(0). This chain is ATP synthase subunit b, found in Yersinia pseudotuberculosis serotype O:1b (strain IP 31758).